The primary structure comprises 465 residues: Clusterin-like protein 1 (465 aa).

The N-terminal stretch at 1-20 (MKPPILVFIVYLLQLRDCQC) is a signal peptide. Residues 62-107 (LMERREEEHSKLMRTLKKCREEKQEALKLMNEVQEHLEEEERLCQV) adopt a coiled-coil conformation. 5 cysteine pairs are disulfide-bonded: Cys-105–Cys-333, Cys-116–Cys-325, Cys-119–Cys-322, Cys-124–Cys-315, and Cys-131–Cys-305. Asn-196 and Asn-257 each carry an N-linked (GlcNAc...) asparagine glycan. The interval 280-300 (LSKQDKDSAHGGPSSTTWPVR) is disordered. Residues Asn-311, Asn-351, Asn-412, and Asn-430 are each glycosylated (N-linked (GlcNAc...) asparagine).

Belongs to the clusterin family.

The protein localises to the secreted. The chain is Clusterin-like protein 1 from Bos taurus (Bovine).